Consider the following 138-residue polypeptide: uncharacterized protein (138 aa).

D35–N42 serves as a coordination point for ATP.

This is an uncharacterized protein from Acanthamoeba polyphaga mimivirus (APMV).